Here is a 237-residue protein sequence, read N- to C-terminus: Cyclic nucleotide phosphodiesterase inhibitor (237 aa).

A signal peptide spans 1–20 (MAKIIISLILLLSLFSFSYG). 3 N-linked (GlcNAc...) asparagine glycosylation sites follow: N28, N65, and N70. Cys-rich CT repeat units follow at residues 57-81 (DLCH…CNDN), 82-105 (NPCT…CDPG), 116-139 (DPCT…CNDG), 140-162 (DACT…CDDN), and 163-186 (DPCT…CSIK). N153 carries an N-linked (GlcNAc...) asparagine glycan. The N-linked (GlcNAc...) asparagine glycan is linked to N207.

PDI acts by binding stoichiometrically to cyclic nucleotide phosphodiesterase, changing the KM of the enzyme for cAMP from 10 uM to 2 mM. The polypeptide is Cyclic nucleotide phosphodiesterase inhibitor (pdiA) (Dictyostelium discoideum (Social amoeba)).